Here is a 441-residue protein sequence, read N- to C-terminus: Keratin, type I cytoskeletal 15 (441 aa).

Residues 2-91 (LLLGHASTST…GGSDLLLGTS (90 aa)) are head. Residues 92–127 (GKEAMQNLNDRLASYLDKVRSLEGKNHELELKIKDW) form a coil 1A region. Residues 92–407 (GKEAMQNLND…MLLDSEDSKG (316 aa)) enclose the IF rod domain. The segment at 128-149 (YSQVIPGTGGPDARDYGHLEKE) is linker 1. The tract at residues 150-241 (IEDLQNKVNN…KNHEEDMKAA (92 aa)) is coil 1B. Residues 242–261 (SSGIAGQVNVELDAAPGTNL) are linker 12. The coil 2 stretch occupies residues 262-403 (LDELDACRRD…ATYRMLLDSE (142 aa)). Positions 404-441 (DSKGSIINHKILTAIEKLVDGIVLSTEVLEKQIPVLSY) are tail.

It belongs to the intermediate filament family. In terms of assembly, heterotetramer of two type I and two type II keratins. In terms of tissue distribution, expressed in skin.

In Protopterus aethiopicus (Marbled lungfish), this protein is Keratin, type I cytoskeletal 15 (KRT15).